The chain runs to 342 residues: Zinc transporter ZIP11 (342 aa).

The next 7 membrane-spanning stretches (helical) occupy residues 12–32 (LLGTFFTWGMTAAGAALVFVF), 44–64 (LGFAAGVMLAASYWSLLAPAV), 72–92 (GFGAFAFFPVAVGFTLGAAFV), 194–214 (IALLILAITIHNVPEGLAVGV), 263–285 (FWYGQLSGMVEPLAGVFGAFAVV), 290–307 (ILPYALAFAAGAMVYVVM), and 322–342 (LASWASILGFVVMMSLDVGLG).

The protein belongs to the ZIP transporter (TC 2.A.5) family.

The protein resides in the cell membrane. Its subcellular location is the nucleus. It localises to the cytoplasm. It is found in the golgi apparatus. The enzyme catalyses Zn(2+)(in) = Zn(2+)(out). The catalysed reaction is Cu(2+)(in) = Cu(2+)(out). Zinc importer that regulates cytosolic zinc concentrations either via zinc influx from the extracellular compartment or efflux from intracellular organelles such as Golgi apparatus. May transport copper ions as well. The transport mechanism remains to be elucidated. This chain is Zinc transporter ZIP11 (SLC39A11), found in Homo sapiens (Human).